The sequence spans 323 residues: UPF0612 protein C569.01c (323 aa).

Coiled-coil stretches lie at residues isoleucine 27 to glutamate 63 and asparagine 131 to serine 225.

The protein belongs to the UPF0612 family.

The sequence is that of UPF0612 protein C569.01c from Schizosaccharomyces pombe (strain 972 / ATCC 24843) (Fission yeast).